Consider the following 51-residue polypeptide: Otoconin-90 (51 aa).

This sequence belongs to the phospholipase A2 family. In terms of assembly, interacts with OTOL1.

Its subcellular location is the secreted. Major protein of the otoconia, a calcium carbonate structure in the saccule and utricle of the ear. Together with OTOL1, acts as a scaffold for otoconia biomineralization: sequesters calcium and forms interconnecting fibrils between otoconia that are incorporated into the calcium crystal structure. Together with OTOL1, modulates calcite crystal morphology and growth kinetics. It is unlikely that this protein has phospholipase A2 activity. This Cavia porcellus (Guinea pig) protein is Otoconin-90 (OC90).